The following is a 102-amino-acid chain: Protamine-2 (102 aa).

Residues 1–102 form a disordered region; the sequence is MVRYRVRSPS…RTRRRTCRKH (102 aa). Serine 8, serine 10, and serine 37 each carry phosphoserine. Residues 39 to 48 show a composition bias toward basic and acidic residues; that stretch reads EHVEVYERTH. The span at 49 to 102 shows a compositional bias: basic residues; the sequence is GHSHYRRRHCSRRRLRRIHRQQHRSCRRRKRRSCRHRRRHRRGCRTRRRTCRKH.

Belongs to the protamine P2 family. As to quaternary structure, interacts with TDRP. Proteolytic processing into mature chains is required for histone eviction during spermatogenesis. Transition proteins (TNP1 and TNP2) are required for processing. Testis.

The protein localises to the nucleus. Its subcellular location is the chromosome. Protamines substitute for histones in the chromatin of sperm during the haploid phase of spermatogenesis. They compact sperm DNA into a highly condensed, stable and inactive complex. This chain is Protamine-2 (PRM2), found in Pan paniscus (Pygmy chimpanzee).